The primary structure comprises 101 residues: Putative RNA-binding protein RbpA (101 aa).

Residues 2-79 (SIYVGNLSYD…RDLKVNKAKP (78 aa)) enclose the RRM domain. Residues 73–83 (KVNKAKPRENR) show a composition bias toward basic and acidic residues. Residues 73–101 (KVNKAKPRENRSGGGSFGGGRKSYGGSRY) form a disordered region. A compositionally biased stretch (gly residues) spans 84-101 (SGGGSFGGGRKSYGGSRY).

In Synechocystis sp. (strain ATCC 27184 / PCC 6803 / Kazusa), this protein is Putative RNA-binding protein RbpA (rbpA).